A 185-amino-acid polypeptide reads, in one-letter code: GTP cyclohydrolase 1 (185 aa).

Cys-75, His-78, and Cys-146 together coordinate Zn(2+).

The protein belongs to the GTP cyclohydrolase I family. Homomer.

The catalysed reaction is GTP + H2O = 7,8-dihydroneopterin 3'-triphosphate + formate + H(+). It participates in cofactor biosynthesis; 7,8-dihydroneopterin triphosphate biosynthesis; 7,8-dihydroneopterin triphosphate from GTP: step 1/1. The polypeptide is GTP cyclohydrolase 1 (Clostridium kluyveri (strain NBRC 12016)).